The following is a 983-amino-acid chain: Bifunctional glutamine synthetase adenylyltransferase/adenylyl-removing enzyme (983 aa).

Positions Met1–Ala468 are adenylyl removase. The tract at residues Ala473–Asp983 is adenylyl transferase.

The protein belongs to the GlnE family. Requires Mg(2+) as cofactor.

It carries out the reaction [glutamine synthetase]-O(4)-(5'-adenylyl)-L-tyrosine + phosphate = [glutamine synthetase]-L-tyrosine + ADP. It catalyses the reaction [glutamine synthetase]-L-tyrosine + ATP = [glutamine synthetase]-O(4)-(5'-adenylyl)-L-tyrosine + diphosphate. Its function is as follows. Involved in the regulation of glutamine synthetase GlnA, a key enzyme in the process to assimilate ammonia. When cellular nitrogen levels are high, the C-terminal adenylyl transferase (AT) inactivates GlnA by covalent transfer of an adenylyl group from ATP to specific tyrosine residue of GlnA, thus reducing its activity. Conversely, when nitrogen levels are low, the N-terminal adenylyl removase (AR) activates GlnA by removing the adenylyl group by phosphorolysis, increasing its activity. The regulatory region of GlnE binds the signal transduction protein PII (GlnB) which indicates the nitrogen status of the cell. The chain is Bifunctional glutamine synthetase adenylyltransferase/adenylyl-removing enzyme from Brucella suis biovar 1 (strain 1330).